We begin with the raw amino-acid sequence, 280 residues long: uncharacterized protein (280 aa).

This is an uncharacterized protein from Aedes vexans (Inland floodwater mosquito).